The following is a 779-amino-acid chain: Phosphoribosylformylglycinamidine synthase subunit PurL (779 aa).

Residue histidine 52 is part of the active site. ATP-binding residues include tyrosine 55 and lysine 94. Glutamate 96 contacts Mg(2+). Residues 97–100 (SHNH) and arginine 119 each bind substrate. The active-site Proton acceptor is the histidine 98. Aspartate 120 provides a ligand contact to Mg(2+). Position 243 (glutamine 243) interacts with substrate. Aspartate 271 provides a ligand contact to Mg(2+). 315-317 (ESQ) serves as a coordination point for substrate. Residues asparagine 523 and glycine 560 each contribute to the ATP site. Residue asparagine 561 coordinates Mg(2+). A substrate-binding site is contributed by serine 563.

This sequence belongs to the FGAMS family. In terms of assembly, monomer. Part of the FGAM synthase complex composed of 1 PurL, 1 PurQ and 2 PurS subunits.

The protein localises to the cytoplasm. The enzyme catalyses N(2)-formyl-N(1)-(5-phospho-beta-D-ribosyl)glycinamide + L-glutamine + ATP + H2O = 2-formamido-N(1)-(5-O-phospho-beta-D-ribosyl)acetamidine + L-glutamate + ADP + phosphate + H(+). It participates in purine metabolism; IMP biosynthesis via de novo pathway; 5-amino-1-(5-phospho-D-ribosyl)imidazole from N(2)-formyl-N(1)-(5-phospho-D-ribosyl)glycinamide: step 1/2. Part of the phosphoribosylformylglycinamidine synthase complex involved in the purines biosynthetic pathway. Catalyzes the ATP-dependent conversion of formylglycinamide ribonucleotide (FGAR) and glutamine to yield formylglycinamidine ribonucleotide (FGAM) and glutamate. The FGAM synthase complex is composed of three subunits. PurQ produces an ammonia molecule by converting glutamine to glutamate. PurL transfers the ammonia molecule to FGAR to form FGAM in an ATP-dependent manner. PurS interacts with PurQ and PurL and is thought to assist in the transfer of the ammonia molecule from PurQ to PurL. In Prochlorococcus marinus (strain MIT 9515), this protein is Phosphoribosylformylglycinamidine synthase subunit PurL.